Here is a 226-residue protein sequence, read N- to C-terminus: PKHD-type hydroxylase PLES_48951 (226 aa).

The Fe2OG dioxygenase domain maps to 78 to 178; sequence KVFPPLFNCY…RYASFFWTQS (101 aa). Fe cation is bound by residues His-96, Asp-98, and His-159. Arg-169 provides a ligand contact to 2-oxoglutarate.

Fe(2+) is required as a cofactor. The cofactor is L-ascorbate.

The sequence is that of PKHD-type hydroxylase PLES_48951 from Pseudomonas aeruginosa (strain LESB58).